The following is a 726-amino-acid chain: Beta-adducin (726 aa).

The segment at 1 to 25 (MSEETVPEAASPPPPQGQPYFDRFS) is disordered. 2 positions are modified to phosphoserine: serine 11 and serine 25. Threonine 55 carries the phosphothreonine; by PKA modification. Serine 60 and serine 344 each carry phosphoserine. An interaction with calmodulin region spans residues 425-444 (KQQKEKTRWLNTPNTYLRVN). The interval 525-726 (AEKSRSPSTE…KSKKKEKVES (202 aa)) is disordered. 2 positions are modified to phosphoserine: serine 530 and serine 532. Threonine 533 carries the phosphothreonine modification. Residue serine 535 is modified to Phosphoserine. Residues 566-586 (EEYKKEVERKKLELDGEKETA) are compositionally biased toward basic and acidic residues. Residues 588–606 (EEPGSPAKSAPASPVQSPA) show a composition bias toward low complexity. Residues serine 592, serine 596, serine 600, and serine 604 each carry the phosphoserine modification. A Phosphothreonine modification is found at threonine 611. Phosphoserine occurs at positions 613, 617, 619, and 621. Residues 621 to 631 (SLEEGTKKTET) show a composition bias toward basic and acidic residues. Over residues 632–645 (SKAATTEPETTQPE) the composition is skewed to low complexity. Residues 665–674 (GLSQMTTSAD) are compositionally biased toward polar residues. The residue at position 675 (threonine 675) is a Phosphothreonine. 6 positions are modified to phosphoserine: serine 686, serine 689, serine 693, serine 697, serine 699, and serine 701. The segment covering 689–701 (SGPMSPEGSPSKS) has biased composition (low complexity). The segment covering 702–726 (PSKKKKKFRTPSFLKKSKKKEKVES) has biased composition (basic residues). Serine 703 is modified (phosphoserine; by PKC). An interaction with calmodulin region spans residues 704-721 (KKKKKFRTPSFLKKSKKK). Serine 713 bears the Phosphoserine; by PKA and PKC mark.

It belongs to the aldolase class II family. Adducin subfamily. In terms of assembly, heterodimer of an alpha and a beta subunit. Found in a complex with ADD2, DMTN and SLC2A1. Interacts with SLC2A1. Post-translationally, the N-terminus is blocked. In terms of tissue distribution, expressed mainly in brain, spleen, kidney cortex and medulla, and heart. Also expressed in human umbilical vein endothelial cells, human vascular smooth muscle cells, kidney tubular cells and K-562 cell line.

The protein localises to the cytoplasm. The protein resides in the cytoskeleton. Its subcellular location is the cell membrane. Membrane-cytoskeleton-associated protein that promotes the assembly of the spectrin-actin network. Binds to the erythrocyte membrane receptor SLC2A1/GLUT1 and may therefore provide a link between the spectrin cytoskeleton to the plasma membrane. Binds to calmodulin. Calmodulin binds preferentially to the beta subunit. The protein is Beta-adducin (ADD2) of Homo sapiens (Human).